We begin with the raw amino-acid sequence, 398 residues long: 1-deoxy-D-xylulose 5-phosphate reductoisomerase (398 aa).

Residues Thr-10, Gly-11, Ser-12, Ile-13, Gly-36, Arg-37, Asn-38, and Asn-124 each contribute to the NADPH site. Lys-125 serves as a coordination point for 1-deoxy-D-xylulose 5-phosphate. Glu-126 contributes to the NADPH binding site. Asp-150 serves as a coordination point for Mn(2+). 1-deoxy-D-xylulose 5-phosphate is bound by residues Ser-151, Glu-152, Ser-186, and His-209. Glu-152 serves as a coordination point for Mn(2+). Gly-215 lines the NADPH pocket. 1-deoxy-D-xylulose 5-phosphate-binding residues include Ser-222, Asn-227, Lys-228, and Glu-231. Glu-231 contributes to the Mn(2+) binding site.

This sequence belongs to the DXR family. In terms of assembly, homodimer. Requires Mg(2+) as cofactor. It depends on Mn(2+) as a cofactor.

It catalyses the reaction 2-C-methyl-D-erythritol 4-phosphate + NADP(+) = 1-deoxy-D-xylulose 5-phosphate + NADPH + H(+). The protein operates within isoprenoid biosynthesis; isopentenyl diphosphate biosynthesis via DXP pathway; isopentenyl diphosphate from 1-deoxy-D-xylulose 5-phosphate: step 1/6. Functionally, catalyzes the NADPH-dependent rearrangement and reduction of 1-deoxy-D-xylulose-5-phosphate (DXP) to 2-C-methyl-D-erythritol 4-phosphate (MEP). The polypeptide is 1-deoxy-D-xylulose 5-phosphate reductoisomerase (Yersinia pseudotuberculosis serotype O:1b (strain IP 31758)).